The chain runs to 174 residues: Shikimate kinase (174 aa).

10–15 (GSGKTA) serves as a coordination point for ATP. T14 provides a ligand contact to Mg(2+). D32, R56, and G78 together coordinate substrate. Position 118 (R118) interacts with ATP. R137 contacts substrate. ATP is bound at residue R154.

This sequence belongs to the shikimate kinase family. Monomer. Mg(2+) is required as a cofactor.

The protein resides in the cytoplasm. It carries out the reaction shikimate + ATP = 3-phosphoshikimate + ADP + H(+). It participates in metabolic intermediate biosynthesis; chorismate biosynthesis; chorismate from D-erythrose 4-phosphate and phosphoenolpyruvate: step 5/7. Its function is as follows. Catalyzes the specific phosphorylation of the 3-hydroxyl group of shikimic acid using ATP as a cosubstrate. The sequence is that of Shikimate kinase from Symbiobacterium thermophilum (strain DSM 24528 / JCM 14929 / IAM 14863 / T).